The chain runs to 336 residues: Probable G-protein coupled receptor 82 (336 aa).

Residues 1-11 are Extracellular-facing; that stretch reads MNNNTTCIQPS. N3 and N4 each carry an N-linked (GlcNAc...) asparagine glycan. Residues 12–32 traverse the membrane as a helical segment; it reads MISSMALPIIYILLCIVGVFG. The Cytoplasmic portion of the chain corresponds to 33–55; it reads NTLSQWIFLTKIGKKTSTHIYLS. A helical transmembrane segment spans residues 56–76; that stretch reads HLVTANLLVCSAMPFMSIYFL. Residues 77–92 lie on the Extracellular side of the membrane; it reads KGFQWEYQSAQCRVVN. A helical transmembrane segment spans residues 93-115; that stretch reads FLGTLSMHASMFVSLLILSWIAI. Residues 116 to 156 are Cytoplasmic-facing; that stretch reads SRYATLMQKDSSQETTSCYEKIFYGHLLKKFRQPNFARKLC. The chain crosses the membrane as a helical span at residues 157-177; sequence IYIWGVVLGIIIPVTVYYSVI. The Extracellular portion of the chain corresponds to 178 to 197; sequence EATEGEESLCYNRQMELGAM. Residues 198–218 traverse the membrane as a helical segment; it reads ISQIAGLIGTTFIGFSFLVVL. The Cytoplasmic segment spans residues 219 to 251; it reads TSYYSFVSHLRKIRTCTSIMEKDLTYSSVKRHL. The helical transmembrane segment at 252-272 threads the bilayer; sequence LVIQILLIVCFLPYSIFKPIF. At 273 to 336 the chain is on the extracellular side; it reads YVLHQRDNCQ…SNSAHMQSYG (64 aa).

Belongs to the G-protein coupled receptor 1 family.

Its subcellular location is the cell membrane. In terms of biological role, orphan receptor. This Homo sapiens (Human) protein is Probable G-protein coupled receptor 82 (GPR82).